Reading from the N-terminus, the 83-residue chain is uncharacterized protein (83 aa).

This sequence belongs to the chlamydial CPn_0710/CT_666/TC_0037 family.

This is an uncharacterized protein from Chlamydia trachomatis serovar D (strain ATCC VR-885 / DSM 19411 / UW-3/Cx).